The following is a 364-amino-acid chain: Membrane-bound lytic murein transglycosylase C (364 aa).

Positions 1-19 (MNKYKKFLPLLVLIPFLAS) are cleaved as a signal peptide. A lipid anchor (N-palmitoyl cysteine) is attached at cysteine 20. The S-diacylglycerol cysteine moiety is linked to residue cysteine 20.

The protein belongs to the transglycosylase Slt family.

It is found in the cell outer membrane. It catalyses the reaction Exolytic cleavage of the (1-&gt;4)-beta-glycosidic linkage between N-acetylmuramic acid (MurNAc) and N-acetylglucosamine (GlcNAc) residues in peptidoglycan, from either the reducing or the non-reducing ends of the peptidoglycan chains, with concomitant formation of a 1,6-anhydrobond in the MurNAc residue.. In terms of biological role, murein-degrading enzyme. May play a role in recycling of muropeptides during cell elongation and/or cell division. The chain is Membrane-bound lytic murein transglycosylase C from Glaesserella parasuis serovar 5 (strain SH0165) (Haemophilus parasuis).